Reading from the N-terminus, the 338-residue chain is Holliday junction branch migration complex subunit RuvB (338 aa).

A large ATPase domain (RuvB-L) region spans residues 4 to 187; the sequence is ADKDRLVSGD…FGISEHMAYY (184 aa). Residues leucine 26, arginine 27, glycine 68, lysine 71, threonine 72, threonine 73, 134–136, arginine 177, tyrosine 187, and arginine 224 contribute to the ATP site; that span reads EDF. Threonine 72 contacts Mg(2+). The small ATPAse domain (RuvB-S) stretch occupies residues 188–258; the sequence is SADDLSEIVK…MVDHALDQLQ (71 aa). The segment at 261–338 is head domain (RuvB-H); it reads QQGLDQIDRK…AHMGMSAEQH (78 aa). Arginine 316 and arginine 321 together coordinate DNA.

Belongs to the RuvB family. Homohexamer. Forms an RuvA(8)-RuvB(12)-Holliday junction (HJ) complex. HJ DNA is sandwiched between 2 RuvA tetramers; dsDNA enters through RuvA and exits via RuvB. An RuvB hexamer assembles on each DNA strand where it exits the tetramer. Each RuvB hexamer is contacted by two RuvA subunits (via domain III) on 2 adjacent RuvB subunits; this complex drives branch migration. In the full resolvosome a probable DNA-RuvA(4)-RuvB(12)-RuvC(2) complex forms which resolves the HJ.

Its subcellular location is the cytoplasm. The enzyme catalyses ATP + H2O = ADP + phosphate + H(+). In terms of biological role, the RuvA-RuvB-RuvC complex processes Holliday junction (HJ) DNA during genetic recombination and DNA repair, while the RuvA-RuvB complex plays an important role in the rescue of blocked DNA replication forks via replication fork reversal (RFR). RuvA specifically binds to HJ cruciform DNA, conferring on it an open structure. The RuvB hexamer acts as an ATP-dependent pump, pulling dsDNA into and through the RuvAB complex. RuvB forms 2 homohexamers on either side of HJ DNA bound by 1 or 2 RuvA tetramers; 4 subunits per hexamer contact DNA at a time. Coordinated motions by a converter formed by DNA-disengaged RuvB subunits stimulates ATP hydrolysis and nucleotide exchange. Immobilization of the converter enables RuvB to convert the ATP-contained energy into a lever motion, pulling 2 nucleotides of DNA out of the RuvA tetramer per ATP hydrolyzed, thus driving DNA branch migration. The RuvB motors rotate together with the DNA substrate, which together with the progressing nucleotide cycle form the mechanistic basis for DNA recombination by continuous HJ branch migration. Branch migration allows RuvC to scan DNA until it finds its consensus sequence, where it cleaves and resolves cruciform DNA. This is Holliday junction branch migration complex subunit RuvB from Lacticaseibacillus paracasei (strain ATCC 334 / BCRC 17002 / CCUG 31169 / CIP 107868 / KCTC 3260 / NRRL B-441) (Lactobacillus paracasei).